Here is a 704-residue protein sequence, read N- to C-terminus: Polyribonucleotide nucleotidyltransferase (704 aa).

Mg(2+)-binding residues include Asp-488 and Asp-494. A KH domain is found at 555–614 (PRITTLKINPEKIRDVIGKGGATIRALTEETGTTIELEDDGTVKIASANGDATKEAIRRI). An S1 motif domain is found at 624 to 692 (GTIYNGKVVR…RQGRVRLSMK (69 aa)).

The protein belongs to the polyribonucleotide nucleotidyltransferase family. Component of the RNA degradosome, which is a multiprotein complex involved in RNA processing and mRNA degradation. Mg(2+) serves as cofactor.

Its subcellular location is the cytoplasm. The enzyme catalyses RNA(n+1) + phosphate = RNA(n) + a ribonucleoside 5'-diphosphate. In terms of biological role, involved in mRNA degradation. Catalyzes the phosphorolysis of single-stranded polyribonucleotides processively in the 3'- to 5'-direction. This chain is Polyribonucleotide nucleotidyltransferase, found in Shewanella sediminis (strain HAW-EB3).